The primary structure comprises 346 residues: Golgi to ER traffic protein 4 (346 aa).

The disordered stretch occupies residues 317-346 (GQNQGGSRRTPQGRSQSKTVEAPPASMELD). Polar residues predominate over residues 321–335 (GGSRRTPQGRSQSKT).

The protein belongs to the GET4 family. As to quaternary structure, component of the get4/get5/sgt2 sorting complex.

The protein localises to the cytoplasm. In terms of biological role, component of the get4/get5/sgt2 sorting complex involved in the GET (guided entry of TA proteins) pathway that leads to the insertion of tail-anchored (TA) proteins into the endoplasmic reticulum. Get4 and get5 form an obligate complex that catalyzes the transfer of tail-anchored proteins destined to the endoplasmic reticulum from sgt2 to the cytosolic targeting factor which then targets the TA protein to the ER membrane via get1/get2. This is Golgi to ER traffic protein 4 from Aspergillus fumigatus (strain ATCC MYA-4609 / CBS 101355 / FGSC A1100 / Af293) (Neosartorya fumigata).